Reading from the N-terminus, the 304-residue chain is Rhodopsin (304 aa).

At 1–13 (YEYPQYYLVNPAA) the chain is on the extracellular side. A helical membrane pass occupies residues 14–38 (YAALGAYMFLLILVGFPINFLTLYV). The Cytoplasmic portion of the chain corresponds to 39 to 50 (TIEHKKLRTPLN). Residues 51–73 (YILLNLAVANLFMVFGGFTTTMF) form a helical membrane-spanning segment. Residues 74 to 87 (TSIRGYFVLGHLGC) are Extracellular-facing. Cys-87 and Cys-164 form a disulfide bridge. Residues 88 to 110 (NLEGFFATLSGEIALWSLVVLAI) traverse the membrane as a helical segment. The 'Ionic lock' involved in activated form stabilization signature appears at 111-113 (ERW). Residues 111–129 (ERWVVVCKPISNFRFGENH) lie on the Cytoplasmic side of the membrane. A helical transmembrane segment spans residues 130-150 (AIMGLAFTWTMAMACAAPPLV). At 151 to 179 (GWSRYIPEGMQCSCGIDYYTRAEGFNNES) the chain is on the extracellular side. Residue Asn-177 is glycosylated (N-linked (GlcNAc...) asparagine). The helical transmembrane segment at 180 to 201 (FVVYMFTCHFMTPLTIVFFCYG) threads the bilayer. Residues 202–229 (RLLCAVKEAAAAQQESETTQRAEREVTR) are Cytoplasmic-facing. Residues 230 to 251 (MVVIMVIAFLICWCPYAGVAWF) traverse the membrane as a helical segment. At 252-263 (IFTHQGSEFGPV) the chain is on the extracellular side. The chain crosses the membrane as a helical span at residues 264 to 285 (FMTIPAFFAKSSSIYNPMIYIC). N6-(retinylidene)lysine is present on Lys-273. Over 286 to 304 (LNKQFRHCMITTLCCGKKA) the chain is Cytoplasmic. Residues Cys-299 and Cys-300 are each lipidated (S-palmitoyl cysteine).

Belongs to the G-protein coupled receptor 1 family. Opsin subfamily. Phosphorylated on some or all of the serine and threonine residues present in the C-terminal region. Post-translationally, contains one covalently linked retinal chromophore.

It localises to the membrane. The protein localises to the cell projection. It is found in the cilium. Its subcellular location is the photoreceptor outer segment. Its function is as follows. Photoreceptor required for image-forming vision at low light intensity. While most salt water fish species use retinal as chromophore, most freshwater fish use 3-dehydroretinal, or a mixture of retinal and 3-dehydroretinal. Light-induced isomerization of 11-cis to all-trans retinal triggers a conformational change that activates signaling via G-proteins. Subsequent receptor phosphorylation mediates displacement of the bound G-protein alpha subunit by arrestin and terminates signaling. The protein is Rhodopsin (rho) of Ictalurus punctatus (Channel catfish).